Reading from the N-terminus, the 619-residue chain is Vitamin B12 transporter BtuB (619 aa).

The N-terminal stretch at 1–25 (MINKKRLLLSTVSIMVISGWNQASA) is a signal peptide. The short motif at 31 to 38 (DSLVVTAS) is the TonB box element. The 115-residue stretch at 43-157 (PISSILAPYT…IGGVINIITT (115 aa)) folds into the TBDR plug domain. Residues L88, S90, and 115 to 116 (IS) contribute to the cyanocob(III)alamin site. The TBDR beta-barrel domain occupies 160–619 (KLGTSLNVGI…EYYLTGSYNF (460 aa)). 3 beta stranded membrane passes run 163–170 (TSLNVGIG), 174–183 (YQTYDGATQQ), and 189–200 (TVLTAAANYTYT). The Ca(2+) site is built by D204, Q216, D218, and D220. The next 2 membrane-spanning stretches (beta stranded) occupy residues 222-232 (FMSKMLWLGVD) and 237-253 (EQVSGFVRAYGYNNRTS). Residues Y254 and D255 each contribute to the Ca(2+) site. Cyanocob(III)alamin is bound at residue A256. Residue D268 participates in Ca(2+) binding. Transmembrane regions (beta stranded) follow at residues 270–284 (RELYSRHYDMGVRFN), 286–303 (GIYSSQLITSYSHTKDYN), 316–332 (SLNDSEQYNLQWGNTFQ), 335–344 (QGIVSTGVDF), 360–376 (KTVRNTGMYLTAQQQLK), 378–388 (FILEGAIRSDK), 392–407 (AGWNTTWQASLGWEFI), 410–424 (YRLIASYGTAFKAPT), 441–450 (ESKQWEGGIE), 456–465 (LTWRMTVYRN), 478–495 (YYNIGKAKIKGVEWTGLI), 499–514 (MFQHQLTIQYIDPRNS), 522–534 (RRAKQQVKYQLDW), 540–556 (DWGLTYQYLGRRYDKDF), 563–577 (RVKLGGVSFWDLTVS), 590–601 (IANLLDKDYETV), and 607–619 (PGREYYLTGSYNF). S316 lines the cyanocob(III)alamin pocket. Cyanocob(III)alamin is bound at residue R522. The TonB C-terminal box signature appears at 602–619 (YGYRIPGREYYLTGSYNF).

This sequence belongs to the TonB-dependent receptor family. BtuB (TC 1.B.14.3.1) subfamily.

It is found in the cell outer membrane. Its function is as follows. Involved in the active translocation of vitamin B12 (cyanocobalamin) across the outer membrane to the periplasmic space. It derives its energy for transport by interacting with the trans-periplasmic membrane protein TonB. The polypeptide is Vitamin B12 transporter BtuB (Photorhabdus laumondii subsp. laumondii (strain DSM 15139 / CIP 105565 / TT01) (Photorhabdus luminescens subsp. laumondii)).